The sequence spans 269 residues: Xyloglucan endotransglucosylase/hydrolase protein 24 (269 aa).

Residues 1–21 (MSPFKIFFFTTLLVAAFSVSA) form the signal peptide. The 191-residue stretch at 22 to 212 (ADFNTDVNVA…WSKAPFMASY (191 aa)) folds into the GH16 domain. Residue glutamate 98 is the Nucleophile of the active site. The active-site Proton donor is glutamate 102. Residue glutamate 102 coordinates xyloglucan. A glycan (N-linked (GlcNAc...) asparagine) is linked at asparagine 106. Xyloglucan-binding positions include 115 to 117 (HTN), 125 to 127 (DKE), 191 to 192 (DW), glycine 196, and arginine 256. The cysteines at positions 251 and 265 are disulfide-linked.

It belongs to the glycosyl hydrolase 16 family. XTH group 2 subfamily. In terms of processing, contains at least one intrachain disulfide bond essential for its enzymatic activity. Post-translationally, N-glycosylated; essential for its enzymatic activity. Highly expressed. Predominantly expressed in stems. Expressed in shoot apical meristems, also found in seedlings and meristems.

The protein resides in the secreted. Its subcellular location is the cell wall. It localises to the extracellular space. The protein localises to the apoplast. It catalyses the reaction breaks a beta-(1-&gt;4) bond in the backbone of a xyloglucan and transfers the xyloglucanyl segment on to O-4 of the non-reducing terminal glucose residue of an acceptor, which can be a xyloglucan or an oligosaccharide of xyloglucan.. Catalyzes xyloglucan endohydrolysis (XEH) and/or endotransglycosylation (XET). Cleaves and religates xyloglucan polymers, an essential constituent of the primary cell wall, and thereby participates in cell wall construction of growing tissues. May be required during development to modify the walls of cells under mechanical stress. The chain is Xyloglucan endotransglucosylase/hydrolase protein 24 (XTH24) from Arabidopsis thaliana (Mouse-ear cress).